Consider the following 274-residue polypeptide: ATP synthase subunit a (274 aa).

5 consecutive transmembrane segments (helical) span residues 43-63 (TLNIDSLFFSVVLGLAFLLVF), 103-123 (VIAPLALTVFVWVLLMNMMDL), 149-169 (DVSITLSMALGVFILIIFYSI), 223-243 (LIFILIAGLLPWWSQWMLSVP), and 245-265 (AIFHILIITLQAFIFMVLTIV).

The protein belongs to the ATPase A chain family. As to quaternary structure, F-type ATPases have 2 components, CF(1) - the catalytic core - and CF(0) - the membrane proton channel. CF(1) has five subunits: alpha(3), beta(3), gamma(1), delta(1), epsilon(1). CF(0) has three main subunits: a(1), b(2) and c(9-12). The alpha and beta chains form an alternating ring which encloses part of the gamma chain. CF(1) is attached to CF(0) by a central stalk formed by the gamma and epsilon chains, while a peripheral stalk is formed by the delta and b chains.

The protein resides in the cell inner membrane. In terms of biological role, key component of the proton channel; it plays a direct role in the translocation of protons across the membrane. This Yersinia pestis bv. Antiqua (strain Antiqua) protein is ATP synthase subunit a.